Reading from the N-terminus, the 367-residue chain is Heme A synthase (367 aa).

The next 5 membrane-spanning stretches (helical) occupy residues Ala-25–Gly-45, Leu-111–Gly-131, Trp-139–Val-159, Leu-174–Gly-194, and Gly-210–Ala-230. Position 274 (His-274) interacts with heme. 3 consecutive transmembrane segments (helical) span residues Ile-276–Ala-296, Ala-305–Met-325, and Val-327–Ile-347. His-335 contributes to the heme binding site.

This sequence belongs to the COX15/CtaA family. Type 2 subfamily. In terms of assembly, interacts with CtaB. Heme b is required as a cofactor.

It localises to the cell membrane. The catalysed reaction is Fe(II)-heme o + 2 A + H2O = Fe(II)-heme a + 2 AH2. The protein operates within porphyrin-containing compound metabolism; heme A biosynthesis; heme A from heme O: step 1/1. In terms of biological role, catalyzes the conversion of heme O to heme A by two successive hydroxylations of the methyl group at C8. The first hydroxylation forms heme I, the second hydroxylation results in an unstable dihydroxymethyl group, which spontaneously dehydrates, resulting in the formyl group of heme A. The chain is Heme A synthase from Rhizobium leguminosarum bv. trifolii (strain WSM2304).